The sequence spans 644 residues: Threonine--tRNA ligase (644 aa).

A TGS domain is found at 1–61 (MINVTLPDGS…DGDAQVAIIT (61 aa)). Residues 243–536 (DHRKLGKQME…LIESYAGKLP (294 aa)) form a catalytic region. Zn(2+)-binding residues include Cys-336, His-387, and His-513.

Belongs to the class-II aminoacyl-tRNA synthetase family. In terms of assembly, homodimer. It depends on Zn(2+) as a cofactor.

The protein localises to the cytoplasm. The enzyme catalyses tRNA(Thr) + L-threonine + ATP = L-threonyl-tRNA(Thr) + AMP + diphosphate + H(+). Functionally, catalyzes the attachment of threonine to tRNA(Thr) in a two-step reaction: L-threonine is first activated by ATP to form Thr-AMP and then transferred to the acceptor end of tRNA(Thr). Also edits incorrectly charged L-seryl-tRNA(Thr). The polypeptide is Threonine--tRNA ligase (Maricaulis maris (strain MCS10) (Caulobacter maris)).